The following is a 346-amino-acid chain: Biotin synthase (346 aa).

The region spanning 38–256 (RQVQVSTLLS…IAVARIMMPT (219 aa)) is the Radical SAM core domain. Residues Cys-53, Cys-57, and Cys-60 each coordinate [4Fe-4S] cluster. [2Fe-2S] cluster contacts are provided by Cys-97, Cys-128, Cys-188, and Arg-260.

Belongs to the radical SAM superfamily. Biotin synthase family. In terms of assembly, homodimer. [4Fe-4S] cluster is required as a cofactor. It depends on [2Fe-2S] cluster as a cofactor.

The enzyme catalyses (4R,5S)-dethiobiotin + (sulfur carrier)-SH + 2 reduced [2Fe-2S]-[ferredoxin] + 2 S-adenosyl-L-methionine = (sulfur carrier)-H + biotin + 2 5'-deoxyadenosine + 2 L-methionine + 2 oxidized [2Fe-2S]-[ferredoxin]. Its pathway is cofactor biosynthesis; biotin biosynthesis; biotin from 7,8-diaminononanoate: step 2/2. In terms of biological role, catalyzes the conversion of dethiobiotin (DTB) to biotin by the insertion of a sulfur atom into dethiobiotin via a radical-based mechanism. The protein is Biotin synthase of Shigella flexneri serotype 5b (strain 8401).